We begin with the raw amino-acid sequence, 316 residues long: Ribosomal RNA small subunit methyltransferase H (316 aa).

Residues 35 to 37, D55, F80, D102, and Q109 contribute to the S-adenosyl-L-methionine site; that span reads GGH.

The protein belongs to the methyltransferase superfamily. RsmH family.

It localises to the cytoplasm. It carries out the reaction cytidine(1402) in 16S rRNA + S-adenosyl-L-methionine = N(4)-methylcytidine(1402) in 16S rRNA + S-adenosyl-L-homocysteine + H(+). Functionally, specifically methylates the N4 position of cytidine in position 1402 (C1402) of 16S rRNA. The sequence is that of Ribosomal RNA small subunit methyltransferase H from Colwellia psychrerythraea (strain 34H / ATCC BAA-681) (Vibrio psychroerythus).